We begin with the raw amino-acid sequence, 63 residues long: MKAQDLREKSVEELNAELMNLLREQFNLRMQAATGQLQQTHTLKAVRRDIARVKTVLTEKAGA.

The protein belongs to the universal ribosomal protein uL29 family.

This is Large ribosomal subunit protein uL29 from Vibrio parahaemolyticus serotype O3:K6 (strain RIMD 2210633).